The chain runs to 196 residues: Pyridoxine/pyridoxamine 5'-phosphate oxidase (196 aa).

Residues 46-51 (RNVLYK), 61-62 (FT), arginine 67, lysine 68, and glutamine 90 each bind FMN. Substrate is bound at residue lysine 51. Substrate-binding residues include tyrosine 108, arginine 112, and serine 116. Residues 125–126 (QS) and tryptophan 169 each bind FMN. 175–177 (RLH) lines the substrate pocket. Arginine 179 provides a ligand contact to FMN.

Belongs to the pyridoxamine 5'-phosphate oxidase family. Homodimer. FMN serves as cofactor.

It catalyses the reaction pyridoxamine 5'-phosphate + O2 + H2O = pyridoxal 5'-phosphate + H2O2 + NH4(+). The enzyme catalyses pyridoxine 5'-phosphate + O2 = pyridoxal 5'-phosphate + H2O2. It participates in cofactor metabolism; pyridoxal 5'-phosphate salvage; pyridoxal 5'-phosphate from pyridoxamine 5'-phosphate: step 1/1. It functions in the pathway cofactor metabolism; pyridoxal 5'-phosphate salvage; pyridoxal 5'-phosphate from pyridoxine 5'-phosphate: step 1/1. Its function is as follows. Catalyzes the oxidation of either pyridoxine 5'-phosphate (PNP) or pyridoxamine 5'-phosphate (PMP) into pyridoxal 5'-phosphate (PLP). The chain is Pyridoxine/pyridoxamine 5'-phosphate oxidase from Coxiella burnetii (strain RSA 493 / Nine Mile phase I).